A 550-amino-acid polypeptide reads, in one-letter code: MADKLFINALKKKFEESPEEKKTTFYTLGGWKQSERKTEFVNAGKEVAAKRGIPQYNPDIGTPLGQRVLMPYQVSTTDTYVEGDDLHFVNNAAMQQMWDDIRRTVIVGLNHAHAVIEKRLGKEVTPETITHYLETVNHAMPGAAVVQEHMVETHPALVADSYVKVFTGNDEIADEIDPAFVIDINKQFPEDQAETLKAEVGDGIWQVVRIPTIVSRTCDGATTSRWSAMQIGMSMISAYKQAAGEAATGDFAYAAKHAEVIHMGTYLPVRRARGENEPGGVPFGYLADICQSSRVNYEDPVRVSLDVVATGAMLYDQIWLGSYMSGGVGFTQYATAAYTDNILDDFTYFGKEYVEDKYGLCEAPNNMDTVLDVATEVTFYGLEQYEEYPALLEDQFGGSQRAAVVAAAAGCSTAFATGNAQTGLSGWYLSMYLHKEQHSRLGFYGYDLQDQCGASNVFSIRGDEGLPLELRGPNYPNYAMNVGHQGEYAGISQAPHAARGDAFVFNPLVKIAFADDNLVFDFTNVRGEFAKGALREFEPAGERALITPAK.

Q147 contributes to the coenzyme F430 binding site. Residues R225, 256–257 (KH), and R270 each bind coenzyme B. H257 carries the post-translational modification Pros-methylhistidine. A 5-methylarginine modification is found at R271. Y333 contacts coenzyme M. Q400 is subject to 2-methylglutamine. A coenzyme M-binding site is contributed by Y444. Position 445 is a 1-thioglycine (G445). D450 is subject to (Z)-2,3-didehydroaspartate. The residue at position 452 (C452) is an S-methylcysteine.

This sequence belongs to the methyl-coenzyme M reductase alpha subunit family. MCR is a hexamer of two alpha, two beta, and two gamma chains, forming a dimer of heterotrimers. It depends on coenzyme F430 as a cofactor. The alpha subunit contains six modified amino acids near the active site region. Is methylated on His-257, Arg-271, Gln-400 and Cys-452, probably by the action of specific S-adenosylmethionine-dependent methyltransferases. Also contains a thioglycine at position 445, forming a thiopeptide bond. Contains a didehydroaspartate residue at position 450. The methylation on C5 of Arg-271 is a post-translational methylation not essential in vivo, but which plays a role for the stability and structural integrity of MCR.

Its subcellular location is the cytoplasm. It catalyses the reaction coenzyme B + methyl-coenzyme M = methane + coenzyme M-coenzyme B heterodisulfide. Its pathway is one-carbon metabolism; methyl-coenzyme M reduction; methane from methyl-coenzyme M: step 1/1. With respect to regulation, methyl-coenzyme M reductase activity is inhibited by 3-nitrooxypropanol (3-NOP) in vitro and in vivo, by oxidation of its active site Ni(I), which stops both growth and methanogenesis. Is also inhibited by the reaction product CoM-S-S-CoB. In terms of biological role, component of the methyl-coenzyme M reductase (MCR) I that catalyzes the reductive cleavage of methyl-coenzyme M (CoM-S-CH3 or 2-(methylthio)ethanesulfonate) using coenzyme B (CoB or 7-mercaptoheptanoylthreonine phosphate) as reductant which results in the production of methane and the mixed heterodisulfide of CoB and CoM (CoM-S-S-CoB). This is the final step in methanogenesis. Neither N-6-mercaptohexanoylthreonine phosphate (H-S-HxoTP) nor N-8-mercaptooctanoylthreonine phosphate (H-SOcoTP) nor any other thiol compound such as CoA or CoM can substitute for CoB as the electron donor. This Methanothermobacter marburgensis (strain ATCC BAA-927 / DSM 2133 / JCM 14651 / NBRC 100331 / OCM 82 / Marburg) (Methanobacterium thermoautotrophicum) protein is Methyl-coenzyme M reductase I subunit alpha (mcrA).